Here is a 187-residue protein sequence, read N- to C-terminus: Adenine phosphoribosyltransferase (187 aa).

The protein belongs to the purine/pyrimidine phosphoribosyltransferase family. As to quaternary structure, homodimer.

It is found in the cytoplasm. The catalysed reaction is AMP + diphosphate = 5-phospho-alpha-D-ribose 1-diphosphate + adenine. The protein operates within purine metabolism; AMP biosynthesis via salvage pathway; AMP from adenine: step 1/1. In terms of biological role, catalyzes a salvage reaction resulting in the formation of AMP, that is energically less costly than de novo synthesis. The polypeptide is Adenine phosphoribosyltransferase (Yersinia enterocolitica serotype O:8 / biotype 1B (strain NCTC 13174 / 8081)).